Reading from the N-terminus, the 286-residue chain is MKDFKDKVMFITGAAHGFGQVIAEGAADRGMKLTIVDIDEPALKKTYQHILDKGAEVLMVTADVTKEASVDDAVEQAMEKFGRIDLLINNAGIALPGRIWELPTRDWEWIMHINLMSQVYAMKRVIPIMIQQKTHADILNVASIAGLVDTPGMPSYHASKFASVGMTEATAYDLQRANIDIDMHVMCPGFVQTDLYHTENHRPAQYSDPTDPYYQSEAYLKGQQFAKYVITNGKPIDTIADTVFKALEDNRFYILTHPEYNPLIEDRVKRIVTDGAPDVHIMDGIM.

NAD(+) is bound by residues aspartate 37, aspartate 63, valine 64, asparagine 90, tyrosine 156, and lysine 160. The Proton acceptor role is filled by tyrosine 156.

This sequence belongs to the short-chain dehydrogenases/reductases (SDR) family.

Its subcellular location is the cytoplasm. The enzyme catalyses (10S)-hydroxy-(12Z)-octadecenoate + NAD(+) = 10-oxo-(12Z)-octadecenoate + NADH + H(+). It carries out the reaction 10-oxo-(11E)-octadecenoate + NADH + H(+) = 10-hydroxy-(11E)-octadecenoate + NAD(+). It catalyses the reaction 10-oxooctadecanoate + NADH + H(+) = 10-hydroxyoctadecanoate + NAD(+). It participates in lipid metabolism; fatty acid metabolism. Functionally, is involved in a saturation metabolic pathway of polyunsaturated fatty acids, that detoxifies unsaturated fatty acids and generates hydroxy fatty acids, oxo fatty acids, conjugated fatty acids such as conjugated linoleic acids (CLAs), and partially saturated trans-fatty acids as intermediates. CLA-DH catalyzes the dehydrogenation/reduction steps in the production of 10-oxo-(12Z)-octadecenoate, 10-hydroxy-(11E)-octadecenoate and 10-hydroxyoctadecanoate during linoleate metabolism. As part of the gut microbiome, this enzyme modifies host fatty acid composition and is expected to improve human health by altering lipid metabolism related to the onset of metabolic syndrome. This is CLA biosynthesis dehydrogenase/reductase from Lactiplantibacillus plantarum (Lactobacillus plantarum).